The following is a 254-amino-acid chain: Hydroxyacylglutathione hydrolase (254 aa).

Zn(2+) contacts are provided by His54, His56, Asp58, His59, His111, Asp130, and His168.

It belongs to the metallo-beta-lactamase superfamily. Glyoxalase II family. As to quaternary structure, monomer. Zn(2+) serves as cofactor.

It catalyses the reaction an S-(2-hydroxyacyl)glutathione + H2O = a 2-hydroxy carboxylate + glutathione + H(+). The protein operates within secondary metabolite metabolism; methylglyoxal degradation; (R)-lactate from methylglyoxal: step 2/2. Thiolesterase that catalyzes the hydrolysis of S-D-lactoyl-glutathione to form glutathione and D-lactic acid. This chain is Hydroxyacylglutathione hydrolase, found in Legionella pneumophila (strain Lens).